Reading from the N-terminus, the 175-residue chain is Cuticle protein CP1876 (175 aa).

Calcified shell.

This Cancer pagurus (Rock crab) protein is Cuticle protein CP1876.